A 563-amino-acid polypeptide reads, in one-letter code: Arginine--tRNA ligase (563 aa).

The 'HIGH' region signature appears at 121–131 (PNIAKPFSIGH).

It belongs to the class-I aminoacyl-tRNA synthetase family. Monomer.

It localises to the cytoplasm. It carries out the reaction tRNA(Arg) + L-arginine + ATP = L-arginyl-tRNA(Arg) + AMP + diphosphate. This chain is Arginine--tRNA ligase, found in Streptococcus pneumoniae (strain P1031).